Consider the following 239-residue polypeptide: Protein TrbH (239 aa).

A helical transmembrane segment spans residues 208-228 (TVVSIICLLMWICLVYIHCGI).

The protein localises to the cell inner membrane. The sequence is that of Protein TrbH (trbH) from Escherichia coli (strain K12).